The chain runs to 355 residues: Uroporphyrinogen decarboxylase (355 aa).

Residues 27–31, Asp78, Tyr155, Ser210, and His328 contribute to the substrate site; that span reads RQAGR.

This sequence belongs to the uroporphyrinogen decarboxylase family. As to quaternary structure, homodimer.

The protein resides in the cytoplasm. It carries out the reaction uroporphyrinogen III + 4 H(+) = coproporphyrinogen III + 4 CO2. Its pathway is porphyrin-containing compound metabolism; protoporphyrin-IX biosynthesis; coproporphyrinogen-III from 5-aminolevulinate: step 4/4. Its function is as follows. Catalyzes the decarboxylation of four acetate groups of uroporphyrinogen-III to yield coproporphyrinogen-III. The polypeptide is Uroporphyrinogen decarboxylase (Pseudomonas fluorescens (strain ATCC BAA-477 / NRRL B-23932 / Pf-5)).